Consider the following 302-residue polypeptide: Potassium/proton antiporter CemA (302 aa).

4 helical membrane-spanning segments follow: residues 55-75, 187-207, 225-247, and 262-282; these read VFVS…ITFL, FVSF…IIIL, FLLI…ELFL, and FIFL…KYWI.

It belongs to the CemA family.

Its subcellular location is the plastid. It is found in the chloroplast inner membrane. It carries out the reaction K(+)(in) + H(+)(out) = K(+)(out) + H(+)(in). Contributes to K(+)/H(+) antiport activity by supporting proton efflux to control proton extrusion and homeostasis in chloroplasts in a light-dependent manner to modulate photosynthesis. Prevents excessive induction of non-photochemical quenching (NPQ) under continuous-light conditions. Indirectly promotes efficient inorganic carbon uptake into chloroplasts. The protein is Potassium/proton antiporter CemA of Tupiella akineta (Green alga).